We begin with the raw amino-acid sequence, 484 residues long: Cobyric acid synthase (484 aa).

Residues 248 to 435 (VLKVIVPVLP…LHGLFEGSQS (188 aa)) form the GATase cobBQ-type domain. C329 serves as the catalytic Nucleophile. H427 is an active-site residue.

Belongs to the CobB/CobQ family. CobQ subfamily.

It functions in the pathway cofactor biosynthesis; adenosylcobalamin biosynthesis. Its function is as follows. Catalyzes amidations at positions B, D, E, and G on adenosylcobyrinic A,C-diamide. NH(2) groups are provided by glutamine, and one molecule of ATP is hydrogenolyzed for each amidation. This chain is Cobyric acid synthase, found in Pseudomonas putida (strain GB-1).